The primary structure comprises 378 residues: S-(hydroxymethyl)glutathione dehydrogenase (378 aa).

The Zn(2+) site is built by C49, H71, C101, C104, C107, C115, and C178.

The protein belongs to the zinc-containing alcohol dehydrogenase family. Class-III subfamily. Homodimer. Zn(2+) serves as cofactor.

The protein resides in the cytoplasm. It carries out the reaction S-(hydroxymethyl)glutathione + NADP(+) = S-formylglutathione + NADPH + H(+). It catalyses the reaction S-(hydroxymethyl)glutathione + NAD(+) = S-formylglutathione + NADH + H(+). The enzyme catalyses a primary alcohol + NAD(+) = an aldehyde + NADH + H(+). The catalysed reaction is a secondary alcohol + NAD(+) = a ketone + NADH + H(+). It carries out the reaction S-nitrosoglutathione + NADH + H(+) = S-(hydroxysulfenamide)glutathione + NAD(+). Its function is as follows. Has high formaldehyde dehydrogenase activity in the presence of glutathione and catalyzes the oxidation of normal alcohols in a reaction that is not GSH-dependent. In addition, hemithiolacetals other than those formed from GSH, including omega-thiol fatty acids, also are substrates. Also acts as a S-nitroso-glutathione reductase by catalyzing the NADH-dependent reduction of S-nitrosoglutathione. In Haemophilus influenzae (strain ATCC 51907 / DSM 11121 / KW20 / Rd), this protein is S-(hydroxymethyl)glutathione dehydrogenase (frmA).